The chain runs to 255 residues: Phosphate import ATP-binding protein PstB (255 aa).

Positions 9 to 250 (MYAQGLQFYY…PRNKQTEDYI (242 aa)) constitute an ABC transporter domain. 41-48 (GPSGCGKS) is a binding site for ATP.

It belongs to the ABC transporter superfamily. Phosphate importer (TC 3.A.1.7) family. In terms of assembly, the complex is composed of two ATP-binding proteins (PstB), two transmembrane proteins (PstC and PstA) and a solute-binding protein (PstS).

It is found in the cell inner membrane. It carries out the reaction phosphate(out) + ATP + H2O = ADP + 2 phosphate(in) + H(+). Part of the ABC transporter complex PstSACB involved in phosphate import. Responsible for energy coupling to the transport system. The chain is Phosphate import ATP-binding protein PstB from Nitratidesulfovibrio vulgaris (strain ATCC 29579 / DSM 644 / CCUG 34227 / NCIMB 8303 / VKM B-1760 / Hildenborough) (Desulfovibrio vulgaris).